A 1389-amino-acid chain; its full sequence is DNA-directed RNA polymerase subunit beta'' (1389 aa).

Zn(2+) is bound by residues Cys220, Cys290, Cys297, and Cys300.

The protein belongs to the RNA polymerase beta' chain family. RpoC2 subfamily. In plastids the minimal PEP RNA polymerase catalytic core is composed of four subunits: alpha, beta, beta', and beta''. When a (nuclear-encoded) sigma factor is associated with the core the holoenzyme is formed, which can initiate transcription. The cofactor is Zn(2+).

It localises to the plastid. Its subcellular location is the chloroplast. The catalysed reaction is RNA(n) + a ribonucleoside 5'-triphosphate = RNA(n+1) + diphosphate. Its function is as follows. DNA-dependent RNA polymerase catalyzes the transcription of DNA into RNA using the four ribonucleoside triphosphates as substrates. The chain is DNA-directed RNA polymerase subunit beta'' from Chloranthus spicatus (Chulantree).